A 147-amino-acid chain; its full sequence is uncharacterized protein (147 aa).

A helical membrane pass occupies residues 3-23; the sequence is APMIGMVVLVVVLGLAVLALS.

To M.leprae ML1147.

The protein localises to the membrane. This is an uncharacterized protein from Mycobacterium tuberculosis (strain CDC 1551 / Oshkosh).